The chain runs to 372 residues: Geranylgeranyl pyrophosphate synthase 4 (372 aa).

Residues 1–22 form the signal peptide; it reads MEAQNIFLYLLIVFLSLHFVFT. 3 residues coordinate isopentenyl diphosphate: K121, R124, and H153. Mg(2+)-binding residues include D160 and D166. R171 contributes to the dimethylallyl diphosphate binding site. R172 contributes to the isopentenyl diphosphate binding site. 5 residues coordinate dimethylallyl diphosphate: K257, T258, Q295, K312, and K322.

Belongs to the FPP/GGPP synthase family. In terms of assembly, monomer. Mg(2+) serves as cofactor. As to expression, faintly expressed in flowers. Expressed in roots and siliques.

It is found in the endoplasmic reticulum. The catalysed reaction is isopentenyl diphosphate + dimethylallyl diphosphate = (2E)-geranyl diphosphate + diphosphate. The enzyme catalyses isopentenyl diphosphate + (2E)-geranyl diphosphate = (2E,6E)-farnesyl diphosphate + diphosphate. It carries out the reaction isopentenyl diphosphate + (2E,6E)-farnesyl diphosphate = (2E,6E,10E)-geranylgeranyl diphosphate + diphosphate. It functions in the pathway isoprenoid biosynthesis; farnesyl diphosphate biosynthesis; farnesyl diphosphate from geranyl diphosphate and isopentenyl diphosphate: step 1/1. The protein operates within isoprenoid biosynthesis; geranyl diphosphate biosynthesis; geranyl diphosphate from dimethylallyl diphosphate and isopentenyl diphosphate: step 1/1. Its pathway is isoprenoid biosynthesis; geranylgeranyl diphosphate biosynthesis; geranylgeranyl diphosphate from farnesyl diphosphate and isopentenyl diphosphate: step 1/1. Functionally, catalyzes the trans-addition of the three molecules of isopentenyl diphosphate (IPP) onto dimethylallyl diphosphate (DMAPP) to form geranylgeranyl diphosphate. The polypeptide is Geranylgeranyl pyrophosphate synthase 4 (Arabidopsis thaliana (Mouse-ear cress)).